An 83-amino-acid polypeptide reads, in one-letter code: Cytochrome b559 subunit alpha (83 aa).

Residues 21–35 form a helical membrane-spanning segment; it reads VIHSITIPSLFIAGW. H23 is a heme binding site.

Belongs to the PsbE/PsbF family. As to quaternary structure, heterodimer of an alpha subunit and a beta subunit. PSII is composed of 1 copy each of membrane proteins PsbA, PsbB, PsbC, PsbD, PsbE, PsbF, PsbH, PsbI, PsbJ, PsbK, PsbL, PsbM, PsbT, PsbX, PsbY, PsbZ, Psb30/Ycf12, at least 3 peripheral proteins of the oxygen-evolving complex and a large number of cofactors. It forms dimeric complexes. Heme b is required as a cofactor.

It localises to the plastid membrane. Functionally, this b-type cytochrome is tightly associated with the reaction center of photosystem II (PSII). PSII is a light-driven water:plastoquinone oxidoreductase that uses light energy to abstract electrons from H(2)O, generating O(2) and a proton gradient subsequently used for ATP formation. It consists of a core antenna complex that captures photons, and an electron transfer chain that converts photonic excitation into a charge separation. The polypeptide is Cytochrome b559 subunit alpha (Cuscuta reflexa (Southern Asian dodder)).